Reading from the N-terminus, the 176-residue chain is NAD(P)H-quinone oxidoreductase subunit 6, chloroplastic (176 aa).

The next 5 membrane-spanning stretches (helical) occupy residues 10 to 30, 32 to 52, 61 to 81, 92 to 112, and 152 to 172; these read ILLV…VLLT, PIYS…FHIP, AQLL…VMFM, LWTV…FSLI, and FYLP…GAIS.

The protein belongs to the complex I subunit 6 family. NDH is composed of at least 16 different subunits, 5 of which are encoded in the nucleus.

Its subcellular location is the plastid. The protein resides in the chloroplast thylakoid membrane. It carries out the reaction a plastoquinone + NADH + (n+1) H(+)(in) = a plastoquinol + NAD(+) + n H(+)(out). The enzyme catalyses a plastoquinone + NADPH + (n+1) H(+)(in) = a plastoquinol + NADP(+) + n H(+)(out). Its function is as follows. NDH shuttles electrons from NAD(P)H:plastoquinone, via FMN and iron-sulfur (Fe-S) centers, to quinones in the photosynthetic chain and possibly in a chloroplast respiratory chain. The immediate electron acceptor for the enzyme in this species is believed to be plastoquinone. Couples the redox reaction to proton translocation, and thus conserves the redox energy in a proton gradient. The polypeptide is NAD(P)H-quinone oxidoreductase subunit 6, chloroplastic (ndhG) (Liriodendron tulipifera (Tuliptree)).